Consider the following 537-residue polypeptide: Quadr-hydrophobin (537 aa).

The N-terminal stretch at 1–17 (MKFITVAAALFASTSLA) is a signal peptide. Hydrophobin stretches follow at residues 63–199 (GGNP…QNPI), 200–299 (GGNP…ENPT), 300–421 (GGNP…QDPL), and 422–537 (GGNP…RAII). N-linked (GlcNAc...) asparagine glycosylation is found at asparagine 70 and asparagine 113. 16 cysteine pairs are disulfide-bonded: cysteine 134/cysteine 183, cysteine 144/cysteine 174, cysteine 145/cysteine 157, cysteine 184/cysteine 195, cysteine 234/cysteine 283, cysteine 244/cysteine 274, cysteine 245/cysteine 257, cysteine 284/cysteine 295, cysteine 356/cysteine 405, cysteine 366/cysteine 396, cysteine 367/cysteine 379, cysteine 406/cysteine 417, cysteine 471/cysteine 520, cysteine 481/cysteine 511, cysteine 482/cysteine 494, and cysteine 521/cysteine 532.

It belongs to the cerato-ulmin hydrophobin family. Homotetramer. Further self-assembles to form highly ordered films at water-air interfaces through intermolecular interactions.

The protein resides in the secreted. It is found in the cell wall. Functionally, aerial growth, conidiation, and dispersal of filamentous fungi in the environment rely upon a capability of their secreting small amphipathic proteins called hydrophobins (HPBs) with low sequence identity. Class I can self-assemble into an outermost layer of rodlet bundles on aerial cell surfaces, conferring cellular hydrophobicity that supports fungal growth, development and dispersal; whereas Class II form highly ordered films at water-air interfaces through intermolecular interactions but contribute nothing to the rodlet structure. This is Quadr-hydrophobin from Cordyceps militaris (Caterpillar fungus).